Consider the following 177-residue polypeptide: Chorismate pyruvate-lyase (177 aa).

The substrate site is built by methionine 37, arginine 79, leucine 117, and glutamate 159.

It belongs to the UbiC family. In terms of assembly, monomer.

Its subcellular location is the cytoplasm. The enzyme catalyses chorismate = 4-hydroxybenzoate + pyruvate. It functions in the pathway cofactor biosynthesis; ubiquinone biosynthesis. In terms of biological role, removes the pyruvyl group from chorismate, with concomitant aromatization of the ring, to provide 4-hydroxybenzoate (4HB) for the ubiquinone pathway. This is Chorismate pyruvate-lyase from Sodalis glossinidius (strain morsitans).